The following is a 390-amino-acid chain: ATP-sensitive inward rectifier potassium channel 11 (390 aa).

Over 1 to 65 (MLSRKGIIPE…LQDVFTTLVD (65 aa)) the chain is Cytoplasmic. ATP contacts are provided by Asn48 and Arg50. The chain crosses the membrane as a helical span at residues 66-92 (LKWPHTLLIFTMSFLCSWLLFAMAWWL). Residues 93–116 (IAFAHGDLAPSEGTAEPCVTSIHS) lie on the Extracellular side of the membrane. Cys110 and Cys142 form a disulfide bridge. Positions 117–133 (FSSAFLFSIEVQVTIGF) form an intramembrane region, discontinuously helical; Pore-forming. K(+)-binding residues include Thr130 and Phe133. Positions 130–135 (TIGFGG) match the Selectivity filter motif. Topologically, residues 134 to 142 (GGRMVTEEC) are extracellular. Residues 143-171 (PLAILILIVQNIVGLMINAIMLGCIFMKT) form a helical membrane-spanning segment. Over 172-390 (AQAHRRAETL…KFSISPDSLS (219 aa)) the chain is Cytoplasmic. Arg176 lines the a 1,2-diacyl-sn-glycero-3-phospho-(1D-myo-inositol-4,5-bisphosphate) pocket. Tyr330 is an ATP binding site. Thr341 carries the phosphothreonine; by MAPK1 modification. The residue at position 385 (Ser385) is a Phosphoserine; by MAPK1.

The protein belongs to the inward rectifier-type potassium channel (TC 1.A.2.1) family. KCNJ11 subfamily. Homotetramer; the homotetramer binds four ATP molecules (one ATP per subunit). Forms an heterooctamer with ABCC8/SUR1; one KCNJ11 homotetramer interacts with four ABCC8/SUR1 molecules. Interacts with ABCC9/SUR2. In terms of processing, phosphorylation by MAPK1 results in changes in channel gating that destabilize the closed states and reduce the ATP sensitivity.

It localises to the membrane. It catalyses the reaction K(+)(in) = K(+)(out). Its activity is regulated as follows. KATP channels are regulated by cytoplasmic ATP/ADP ratios; ATP inhibits the channel by closing the pore, while ADP activates the channel. Activated by phosphatidylinositol 4,5-biphosphate (PtdIns(4,5)P2). In terms of biological role, inward rectifier potassium channel that forms the pore of ATP-sensitive potassium channels (KATP), regulating potassium permeability as a function of cytoplasmic ATP and ADP concentrations in many different cells. Inward rectifier potassium channels are characterized by a greater tendency to allow potassium to flow into the cell rather than out of it. Their voltage dependence is regulated by the concentration of extracellular potassium; as external potassium is raised, the voltage range of the channel opening shifts to more positive voltages. The inward rectification is mainly due to the blockage of outward current by internal magnesium. Can be blocked by extracellular barium. In pancreatic cells, it forms KATP channels with ABCC8/SUR1. Can form cardiac and smooth muscle-type KATP channels with ABCC9. This chain is ATP-sensitive inward rectifier potassium channel 11 (KCNJ11), found in Homo sapiens (Human).